Reading from the N-terminus, the 463-residue chain is NADH dehydrogenase [ubiquinone] iron-sulfur protein 2, mitochondrial (463 aa).

The N-terminal 33 residues, 1 to 33 (MAALRALRCLRGVGAPVLRPGSGIRLPSQPSRG), are a transit peptide targeting the mitochondrion. K62 is modified (N6-acetyllysine). Symmetric dimethylarginine is present on R118. Residues C326, C332, and C347 each contribute to the [4Fe-4S] cluster site.

It belongs to the complex I 49 kDa subunit family. As to quaternary structure, core subunit of respiratory chain NADH dehydrogenase (Complex I) which is composed of 45 different subunits. Component of the iron-sulfur (IP) fragment of the enzyme. Interacts with NDUFAF3. Interacts with NDUFAF7. Interacts with CERS2. The cofactor is [4Fe-4S] cluster. Post-translationally, dimethylation at Arg-118 by NDUFAF7 takes place after NDUFS2 assembles into the complex I, leading to stabilize the early intermediate complex.

Its subcellular location is the mitochondrion inner membrane. It carries out the reaction a ubiquinone + NADH + 5 H(+)(in) = a ubiquinol + NAD(+) + 4 H(+)(out). Functionally, core subunit of the mitochondrial membrane respiratory chain NADH dehydrogenase (Complex I) which catalyzes electron transfer from NADH through the respiratory chain, using ubiquinone as an electron acceptor. Essential for the catalytic activity and assembly of complex I. Redox-sensitive, critical component of the oxygen-sensing pathway in the pulmonary vasculature which plays a key role in acute pulmonary oxygen-sensing and hypoxic pulmonary vasoconstriction. Plays an important role in carotid body sensing of hypoxia. Essential for glia-like neural stem and progenitor cell proliferation, differentiation and subsequent oligodendrocyte or neuronal maturation. This is NADH dehydrogenase [ubiquinone] iron-sulfur protein 2, mitochondrial (Ndufs2) from Mus musculus (Mouse).